Reading from the N-terminus, the 1076-residue chain is Nickel and cobalt resistance protein CnrA (1076 aa).

The next 12 helical transmembrane spans lie at 14-34 (WLVLFLTAVVAVIGAWQLNLL), 366-386 (TVAKNLIEGALLVVAILFALL), 390-410 (RAATIAALVIPLSLLVSAIGM), 418-438 (NLMSLGALDFGLIIDGAVIIV), 475-495 (PTVYGQLVIFMVFLPCLTFQG), 502-522 (SPMVITLMLALASAFVLSLTF), 561-581 (PMPFIGAGIATVAVATVAFTF), 903-923 (RLAIIVPLCFILIAATLYMAI), 928-948 (LTATVLTAVPLALAGGVFALL), 959-979 (AVGFIAVSGVAVLNGLVLISA), 1003-1023 (RPVLMTALVASLGFVPMAIAT), and 1035-1055 (TVVIGGLVTATVLTLFVLPAL).

The protein belongs to the resistance-nodulation-cell division (RND) (TC 2.A.6) family.

Its subcellular location is the cell inner membrane. Its function is as follows. The products of the genes cnrA, cnrB, and cnrC are likely to form a membrane-bound protein complex catalyzing an energy-dependent efflux of Ni(2+) and Co(2+). The mechanism of action of the CnrCBA complex may be that of a proton/cation antiporter. The chain is Nickel and cobalt resistance protein CnrA (cnrA) from Cupriavidus metallidurans (strain ATCC 43123 / DSM 2839 / NBRC 102507 / CH34) (Ralstonia metallidurans).